We begin with the raw amino-acid sequence, 582 residues long: Mitogen-activated protein kinase 17 (582 aa).

The disordered stretch occupies residues 22-61 (SSSFHLTTTGDDTVKDLHDPRREDAEGDGWEEVHEGPESD). Residues 33-45 (DTVKDLHDPRRED) show a composition bias toward basic and acidic residues. Residues 105–396 (YKVSEVIGKG…AEEALTDPYF (292 aa)) enclose the Protein kinase domain. ATP is bound by residues 111–119 (IGKGSYGVV) and K134. D231 (proton acceptor) is an active-site residue. Phosphothreonine is present on T267. The TXY motif lies at 267-269 (TDY). A Phosphotyrosine modification is found at Y269. 2 disordered regions span residues 474–502 (EGVSKGEKSSPQLRQNASLPRERAIGNKH) and 542–582 (ISAS…QLKT). Positions 482–491 (SSPQLRQNAS) are enriched in polar residues. Basic and acidic residues predominate over residues 493–502 (PRERAIGNKH). The span at 557–572 (DQEDSLTESMDETADE) shows a compositional bias: acidic residues.

The protein belongs to the protein kinase superfamily. CMGC Ser/Thr protein kinase family. MAP kinase subfamily. Post-translationally, dually phosphorylated on Thr-267 and Tyr-269, which activates the enzyme.

It carries out the reaction L-seryl-[protein] + ATP = O-phospho-L-seryl-[protein] + ADP + H(+). It catalyses the reaction L-threonyl-[protein] + ATP = O-phospho-L-threonyl-[protein] + ADP + H(+). With respect to regulation, activated by threonine and tyrosine phosphorylation. This is Mitogen-activated protein kinase 17 (MPK17) from Oryza sativa subsp. japonica (Rice).